The chain runs to 330 residues: tRNA uridine(34) hydroxylase (330 aa).

Residues 123–217 (SDPEVILVDT…YLEEVKQEES (95 aa)) enclose the Rhodanese domain. Residue C177 is the Cysteine persulfide intermediate of the active site.

Belongs to the TrhO family.

The catalysed reaction is uridine(34) in tRNA + AH2 + O2 = 5-hydroxyuridine(34) in tRNA + A + H2O. Functionally, catalyzes oxygen-dependent 5-hydroxyuridine (ho5U) modification at position 34 in tRNAs. The protein is tRNA uridine(34) hydroxylase of Shewanella sp. (strain ANA-3).